The following is a 184-amino-acid chain: Cytidylate kinase (184 aa).

8 to 16 (GQPGSGKTT) contributes to the ATP binding site.

Belongs to the cytidylate kinase family. Type 2 subfamily.

Its subcellular location is the cytoplasm. It catalyses the reaction CMP + ATP = CDP + ADP. The catalysed reaction is dCMP + ATP = dCDP + ADP. This Pyrobaculum islandicum (strain DSM 4184 / JCM 9189 / GEO3) protein is Cytidylate kinase.